The chain runs to 287 residues: MEQLLEKALILQEALPFIRDFYGKVFVVKYGGAAMEEEELKHSFAKDIALLRYVGIKVVLVHGGGKDITNMLNKLNIQTEFINGIRKTDKESLDVARMVLIGKLNKDIVSMLNKEMSNMHGAIGLSGIDANLLICTKYYQDGEDIGYVGKVKTVNTKLIRELIQMDYTPVIAPIGIDPESNQMYNVNADMAATEIACELGAEKLIFLTDTDGILDKSGKTISSIHKNQYKELIEDGTITKGMIPKINSAIDAILRGVRKVHIINGKIKHSILIEVFTKEGIGTEISL.

Substrate contacts are provided by residues 64 to 65 (GG), Arg86, and Asn185.

It belongs to the acetylglutamate kinase family. ArgB subfamily.

It is found in the cytoplasm. The catalysed reaction is N-acetyl-L-glutamate + ATP = N-acetyl-L-glutamyl 5-phosphate + ADP. It participates in amino-acid biosynthesis; L-arginine biosynthesis; N(2)-acetyl-L-ornithine from L-glutamate: step 2/4. Functionally, catalyzes the ATP-dependent phosphorylation of N-acetyl-L-glutamate. The sequence is that of Acetylglutamate kinase from Hydrogenobaculum sp. (strain Y04AAS1).